Here is a 240-residue protein sequence, read N- to C-terminus: Sugar fermentation stimulation protein homolog (240 aa).

It belongs to the SfsA family.

The polypeptide is Sugar fermentation stimulation protein homolog (Saccharolobus islandicus (strain M.16.4 / Kamchatka #3) (Sulfolobus islandicus)).